A 119-amino-acid chain; its full sequence is MTRVRRGYIARRRRTKIRLFASTFRGAHSRLTRTATQQKMRALVSIYRDRGRQKREFRRLWIARINAATHENGVSYSRLINDLYKRQLLLNRKIPAQIARYNLNSLYMISNEIIKEKRD.

The protein belongs to the bacterial ribosomal protein bL20 family.

It localises to the plastid. It is found in the chloroplast. Binds directly to 23S ribosomal RNA and is necessary for the in vitro assembly process of the 50S ribosomal subunit. It is not involved in the protein synthesizing functions of that subunit. This is Large ribosomal subunit protein bL20c from Amborella trichopoda.